The sequence spans 666 residues: MRAVRAETRARELFRDAAFPASDSSLFYNLSTPLAQFREDITWRRPQDICATPQLFPDNPWEGQVKQGLLGDCWFLCACAALQKSRHLLDQVFPPGQPGWSDQEYQGFFTCRIWQFGHWEEVTIDDRLPCLAGRLCFSRCQREDVFWLPLLEKAYAKVHGSYEHLWAGQVADALVDLTGSLAERWSLKDIRKASGQQDRPSGGEHRACQQLLRLKDQCLLSCSVLSPRAGARELGEFHAFIISDLQELRSQTGQGILLLRIHNPWGRRCWQGLWREGGEGWNQVEPAKESELLAQLQEGEFWVEEEEFLREFDEVTIGYPVTEAGHLQSLYTEKVLCHTRALPGAWVTGQSAGGCRNNSCFPCNPKFWLRLLEPSEVCVAVLQRPRRRLVGQTRALAGASPAPVNLPGKDYQAVGLHIWKVEKRKISLPRVLSAPPVAGTACHAYDREIHLRCELSPGYYLAVPSTFLKDVPGQFLLRVFSTGKISLSAVRLATKGASPGAALPAGEWETVQLQGSWRAGQTAGGSRNFASYPCNPCLPFSVPEGAGPRYIRITLQQHCRLSDSQLHPIGFHVFQVPADGEKQDACSLLLQEPLLSCVPHCYAQEVSRLCLLSAGNYRIVPSTYLPDTEGTFTVTIATRIDRQSIHSQEMLGQLLQEVSFMAVMKA.

Residues 13 to 321 form the Calpain catalytic domain; it reads LFRDAAFPAS…FDEVTIGYPV (309 aa). Residues Cys73, His238, and Asn263 contribute to the active site. Domain III regions lie at residues 322–488 and 507–648; these read TEAG…ISLS and EWET…IHSQ.

It belongs to the peptidase C2 family. In terms of tissue distribution, ubiquitous.

It is found in the cytoplasm. Its subcellular location is the nucleus. Calcium-regulated non-lysosomal thiol-protease which catalyzes limited proteolysis of substrates involved in cytoskeletal remodeling and signal transduction. May play a role in insulin-stimulated glucose uptake. The protein is Calpain-10 (Capn10) of Rattus norvegicus (Rat).